Consider the following 343-residue polypeptide: Flavonoid 3'-O-methyltransferase FOMT (343 aa).

G184, D207, D227, M228, M240, and K241 together coordinate S-adenosyl-L-homocysteine. The active-site Proton acceptor is H245. Catalysis depends on residues E273 and E305.

The protein belongs to the class I-like SAM-binding methyltransferase superfamily. Cation-independent O-methyltransferase family. In terms of assembly, homodimer.

The catalysed reaction is 3',5-dihydroxy-3,4',7-trimethoxyflavone + S-adenosyl-L-methionine = 5-hydroxy-3,7,3',4'-tetramethoxyflavone + S-adenosyl-L-homocysteine + H(+). The protein operates within flavonoid metabolism. Its activity is regulated as follows. Inhibited by nickel (NiCl(2) and NiSO(4)) and para-chloromercuribenzoate. Its function is as follows. Catalyzes the 3'- or 5'-O-methylation of partially methylated flavonols, but does not accept quercetin or caffeate as substrates for methylation. This Chrysosplenium americanum (American golden saxifrage) protein is Flavonoid 3'-O-methyltransferase FOMT.